Here is a 306-residue protein sequence, read N- to C-terminus: Hydroxypyruvate reductase (306 aa).

NAD(+) is bound by residues 152–153 (NI), Asp172, 228–230 (TAR), and Asp254. Residue Arg230 is part of the active site. Residue Glu259 is part of the active site. Residue His280 is the Proton donor of the active site. Position 280–283 (280–283 (HIGA)) interacts with NAD(+).

This sequence belongs to the D-isomer specific 2-hydroxyacid dehydrogenase family.

It carries out the reaction (R)-glycerate + NAD(+) = 3-hydroxypyruvate + NADH + H(+). It catalyses the reaction (R)-glycerate + NADP(+) = 3-hydroxypyruvate + NADPH + H(+). Its function is as follows. Involved in the degradation of L-serine via 3-hydroxypyruvate. Catalyzes the non-reversible reduction of 3-hydroxypyruvate to yield D-glycerate. In Thermotoga maritima (strain ATCC 43589 / DSM 3109 / JCM 10099 / NBRC 100826 / MSB8), this protein is Hydroxypyruvate reductase.